The primary structure comprises 339 residues: AT-hook motif nuclear-localized protein 26 (339 aa).

Positions 1–12 (MDPVQSHGSQSS) are enriched in polar residues. Disordered regions lie at residues 1-132 (MDPV…NKPK) and 273-339 (MQTP…RPPY). The segment covering 24–45 (LHLQQQQQHQQQHQQQQQQQFF) has biased composition (low complexity). A compositionally biased stretch (polar residues) spans 82 to 93 (NMDNIANTNSGS). The segment covering 102–113 (GGEGGSGGGGSG) has biased composition (gly residues). A DNA-binding region (a.T hook) is located at residues 118–130 (RRPRGRPAGSKNK). The region spanning 142 to 279 (ANALRTHVME…EDEMQTPVQG (138 aa)) is the PPC domain. Residues 278–291 (QGGGGGGGGGGGMG) show a composition bias toward gly residues. Positions 292-310 (SPPMMGQQQAMAAMAAAQG) are enriched in low complexity.

Its subcellular location is the nucleus. Its function is as follows. Transcription factor that specifically binds AT-rich DNA sequences related to the nuclear matrix attachment regions (MARs). The protein is AT-hook motif nuclear-localized protein 26 of Arabidopsis thaliana (Mouse-ear cress).